The chain runs to 304 residues: Histone H1.8 (304 aa).

Residues 1-24 (MAPGSVSSVSSSSFPSRDTSPSGS) show a composition bias toward low complexity. Disordered stretches follow at residues 1–38 (MAPGSVSSVSSSSFPSRDTSPSGSCGLPGADKPGPSCR), 110–248 (SKAK…NSVA), and 270–304 (TVQETKVPTPSQDIGHKVQPIPRVRKAKTPENTQA). Residues 45 to 123 (RNPTMLHMVL…GATGSFKLVP (79 aa)) enclose the H15 domain. Low complexity predominate over residues 132–144 (APKAGRGAAGAKE). Composition is skewed to basic and acidic residues over residues 153-166 (LKKDQVGKATMEKG), 189-202 (KPKEVRKAPLKQDK), and 225-237 (ANAHGKTKGEKSK). Positions 154 to 170 (KKDQVGKATMEKGQKRR) match the Nuclear localization signal motif. Polar residues predominate over residues 270-281 (TVQETKVPTPSQ).

Belongs to the histone H1/H5 family. As to expression, oocyte-specific.

Its subcellular location is the cytoplasm. The protein resides in the nucleus. The protein localises to the chromosome. Its function is as follows. May play a key role in the control of gene expression during oogenesis and early embryogenesis, presumably through the perturbation of chromatin structure. Essential for meiotic maturation of germinal vesicle-stage oocytes. The somatic type linker histone H1c is rapidly replaced by H1oo in a donor nucleus transplanted into an oocyte. The greater mobility of H1oo as compared to H1c may contribute to this rapid replacement and increased instability of the embryonic chromatin structure. The rapid replacement of H1c with H1oo may play an important role in nuclear remodeling. In Mus musculus (Mouse), this protein is Histone H1.8.